A 134-amino-acid chain; its full sequence is ATP synthase epsilon chain (134 aa).

The segment covering Ala-94–His-104 has biased composition (basic and acidic residues). Positions Ala-94 to Asn-115 are disordered.

Belongs to the ATPase epsilon chain family. As to quaternary structure, F-type ATPases have 2 components, CF(1) - the catalytic core - and CF(0) - the membrane proton channel. CF(1) has five subunits: alpha(3), beta(3), gamma(1), delta(1), epsilon(1). CF(0) has three main subunits: a, b and c.

It localises to the cell membrane. Produces ATP from ADP in the presence of a proton gradient across the membrane. The chain is ATP synthase epsilon chain from Staphylococcus epidermidis (strain ATCC 35984 / DSM 28319 / BCRC 17069 / CCUG 31568 / BM 3577 / RP62A).